We begin with the raw amino-acid sequence, 965 residues long: FKBP12-associated protein 1 (965 aa).

An RING-type; degenerate zinc finger spans residues 68 to 118 (CMICTVEMDYTCQMFACKRCYRVFDYGCIREWALKSTEKTVDRIWKCPNCY). 5 consecutive NF-X1-type zinc fingers follow at residues 159–177 (CMHG…ECTR), 216–235 (CSIH…PCPE), 362–382 (CGKH…PCLQ), 468–487 (CGIH…PCLE), and 586–606 (CYHT…VCKQ). The region spanning 733–796 (ERWCSQIEAI…MRSVFIKKED (64 aa)) is the R3H domain. Threonine 951 carries the post-translational modification Phosphothreonine. Serine 958 carries the phosphoserine modification.

This sequence belongs to the NFX1 family. Interacts with FPR1.

Its subcellular location is the cytoplasm. The protein resides in the nucleus. Its function is as follows. May play a role in transcription regulation. This is FKBP12-associated protein 1 (FAP1) from Saccharomyces cerevisiae (strain ATCC 204508 / S288c) (Baker's yeast).